A 101-amino-acid chain; its full sequence is Small ribosomal subunit protein uS14 (101 aa).

It belongs to the universal ribosomal protein uS14 family. Part of the 30S ribosomal subunit. Contacts proteins S3 and S10.

Functionally, binds 16S rRNA, required for the assembly of 30S particles and may also be responsible for determining the conformation of the 16S rRNA at the A site. This Blochmanniella floridana protein is Small ribosomal subunit protein uS14.